The primary structure comprises 261 residues: Cytochrome c oxidase subunit 3 (261 aa).

At 1 to 15 (MTHQTHAYHMVNPSP) the chain is on the mitochondrial matrix side. The helical transmembrane segment at 16–33 (WPLTGAFSALLLTSGLVM) threads the bilayer. The Mitochondrial intermembrane segment spans residues 34–38 (WFHYN). A helical transmembrane segment spans residues 39–62 (SITLLTLGLLTNILTMYQWWRDVI). The Mitochondrial matrix portion of the chain corresponds to 63 to 77 (REGTYQGHHTPIVQK). A helical transmembrane segment spans residues 78-99 (GLRYGMILFIVSEVFFFAGFFW). At 100 to 129 (AFYHSSLVPTHDLGGCWPPTGISPLNPLEV) the chain is on the mitochondrial intermembrane side. Residues 130–150 (PLLNTSVLLASGVSITWAHHS) form a helical membrane-spanning segment. At 151–156 (LMEGKR) the chain is on the mitochondrial matrix side. The helical transmembrane segment at 157–178 (NHMNQALLITIMLGLYFTILQA) threads the bilayer. The Mitochondrial intermembrane segment spans residues 179–198 (SEYFETSFSISDGIYGSTFF). A helical transmembrane segment spans residues 199-224 (MATGFHGLHVIIGSTFLIVCLLRQLK). Residues 225 to 232 (FHFTSKHH) are Mitochondrial matrix-facing. The helical transmembrane segment at 233 to 255 (FGFEAAAWYWHFVDVVWLFLYVS) threads the bilayer. Topologically, residues 256–261 (IYWWGS) are mitochondrial intermembrane.

The protein belongs to the cytochrome c oxidase subunit 3 family. Component of the cytochrome c oxidase (complex IV, CIV), a multisubunit enzyme composed of 14 subunits. The complex is composed of a catalytic core of 3 subunits MT-CO1, MT-CO2 and MT-CO3, encoded in the mitochondrial DNA, and 11 supernumerary subunits COX4I, COX5A, COX5B, COX6A, COX6B, COX6C, COX7A, COX7B, COX7C, COX8 and NDUFA4, which are encoded in the nuclear genome. The complex exists as a monomer or a dimer and forms supercomplexes (SCs) in the inner mitochondrial membrane with NADH-ubiquinone oxidoreductase (complex I, CI) and ubiquinol-cytochrome c oxidoreductase (cytochrome b-c1 complex, complex III, CIII), resulting in different assemblies (supercomplex SCI(1)III(2)IV(1) and megacomplex MCI(2)III(2)IV(2)).

The protein resides in the mitochondrion inner membrane. It catalyses the reaction 4 Fe(II)-[cytochrome c] + O2 + 8 H(+)(in) = 4 Fe(III)-[cytochrome c] + 2 H2O + 4 H(+)(out). In terms of biological role, component of the cytochrome c oxidase, the last enzyme in the mitochondrial electron transport chain which drives oxidative phosphorylation. The respiratory chain contains 3 multisubunit complexes succinate dehydrogenase (complex II, CII), ubiquinol-cytochrome c oxidoreductase (cytochrome b-c1 complex, complex III, CIII) and cytochrome c oxidase (complex IV, CIV), that cooperate to transfer electrons derived from NADH and succinate to molecular oxygen, creating an electrochemical gradient over the inner membrane that drives transmembrane transport and the ATP synthase. Cytochrome c oxidase is the component of the respiratory chain that catalyzes the reduction of oxygen to water. Electrons originating from reduced cytochrome c in the intermembrane space (IMS) are transferred via the dinuclear copper A center (CU(A)) of subunit 2 and heme A of subunit 1 to the active site in subunit 1, a binuclear center (BNC) formed by heme A3 and copper B (CU(B)). The BNC reduces molecular oxygen to 2 water molecules using 4 electrons from cytochrome c in the IMS and 4 protons from the mitochondrial matrix. This chain is Cytochrome c oxidase subunit 3 (mt-Co3), found in Mus musculus (Mouse).